The chain runs to 515 residues: 2-isopropylmalate synthase (515 aa).

A Pyruvate carboxyltransferase domain is found at 5-267; the sequence is VIIFDTTLRD…HTNLKHDEIH (263 aa). Positions 14, 202, 204, and 238 each coordinate Mn(2+). Residues 392 to 515 are regulatory domain; the sequence is KLNYLSVQSG…EIKQKKVETV (124 aa).

This sequence belongs to the alpha-IPM synthase/homocitrate synthase family. LeuA type 1 subfamily. As to quaternary structure, homodimer. Mn(2+) serves as cofactor.

The protein resides in the cytoplasm. It carries out the reaction 3-methyl-2-oxobutanoate + acetyl-CoA + H2O = (2S)-2-isopropylmalate + CoA + H(+). It participates in amino-acid biosynthesis; L-leucine biosynthesis; L-leucine from 3-methyl-2-oxobutanoate: step 1/4. Its function is as follows. Catalyzes the condensation of the acetyl group of acetyl-CoA with 3-methyl-2-oxobutanoate (2-ketoisovalerate) to form 3-carboxy-3-hydroxy-4-methylpentanoate (2-isopropylmalate). In Aliivibrio fischeri (strain MJ11) (Vibrio fischeri), this protein is 2-isopropylmalate synthase.